A 666-amino-acid polypeptide reads, in one-letter code: Protein OS-9 (666 aa).

A signal peptide spans 1 to 30 (MAAEALLSSLLGLLFLGLLLPAHLTGGVGS). The 123-residue stretch at 108–230 (APCLLKTKDW…SIRTSRLCPH (123 aa)) folds into the MRH domain. Residues C110 and C123 are joined by a disulfide bond. W117, W118, and Q130 together coordinate a mannooligosaccharide derivative. N177 carries an N-linked (GlcNAc...) asparagine glycan. 2 disulfides stabilise this stretch: C181/C216 and C196/C228. Residues D182, R188, E212, and Y218 each coordinate a mannooligosaccharide derivative. 4 disordered regions span residues 261 to 356 (RQAE…NVQV), 370 to 449 (EELK…SDRE), 505 to 540 (ESQS…EHRV), and 631 to 666 (EANK…EFDF). 2 stretches are compositionally biased toward basic and acidic residues: residues 263–281 (AESK…DTDH) and 294–310 (PKKE…ESEF). Residues 320-332 (QATGTEEAQAGEQ) show a composition bias toward low complexity. Composition is skewed to basic and acidic residues over residues 370–379 (EELKGAEKGK) and 395–412 (PQRE…RGLV). Positions 413–429 (EEEDGDEEEEDEDEDEQ) are enriched in acidic residues. The segment covering 434–449 (EFEKELEGMLLPSDRE) has biased composition (basic and acidic residues). The segment covering 631-646 (EANKERQRQSELESNY) has biased composition (basic and acidic residues). The span at 657–666 (DTGDLDEFDF) shows a compositional bias: acidic residues.

It belongs to the OS-9 family. Component of the HRD1 complex, which comprises at least SYNV1/HRD1, DERL1/2, FAM8A1, HERPUD1/HERP, OS9, SEL1L and UBE2J1. FAM8A1 is stabilized by interaction with SYNV1, which prevents its proteasomal degradation. OS9 and UBE2J1 recruitment to the complex may be mediated by SEL1L. Through this complex, may interact with ERLEC1 and HSPA5. Interacts (via C-terminus) with CPNE6 (via second C2 domain); this interaction occurs in a calcium-dependent manner in vitro. Interacts with CREB3. In terms of processing, intramolecular disulfide bonds.

It is found in the endoplasmic reticulum lumen. Functionally, lectin component of the HRD1 complex, which functions in endoplasmic reticulum (ER) quality control and ER-associated degradation (ERAD). Specifically recognizes and binds improperly folded glycoproteins as well as hyperglycosylated proteins, retain them in the ER, and transfers them to the ubiquitination machinery and promote their degradation. Possible targets include TRPV4 as well as hyperglycosylated HSP90B1. The sequence is that of Protein OS-9 (Os9) from Rattus norvegicus (Rat).